Reading from the N-terminus, the 825-residue chain is Hypoxia-inducible factor 1-alpha (825 aa).

Residues 1–30 (MEGAGGENEKKKMSSERRKEKSRDAARSRR) form a disordered region. Positions 1–401 (MEGAGGENEK…KEPDALTLLA (401 aa)) are interaction with TSGA10. The span at 7–30 (ENEKKKMSSERRKEKSRDAARSRR) shows a compositional bias: basic and acidic residues. The 54-residue stretch at 17–70 (RRKEKSRDAARSRRSKESEVFYELAHQLPLPHNVSSHLDKASVMRLTISYLRVR) folds into the bHLH domain. The tract at residues 21-30 (KSRDAARSRR) is DNA-binding. The region spanning 85–158 (KAQMNCFYLK…THRNGPVRKG (74 aa)) is the PAS 1 domain. Residues 170-191 (RMKCTLTSRGRTMNIKSATWKV) are required for heterodimer formation with ARNT. Positions 228 to 298 (PHPSNIEIPL…KTHHDMFTKG (71 aa)) constitute a PAS 2 domain. S247 carries the post-translational modification Phosphoserine; by CK1. A PAC domain is found at 302–345 (TGQYRMLAKRGGYVWVETQATVIYNTKDSQPQCIVCVNYVVSGI). Residues 401–602 (APAAGDTIIS…STVTGFQQTQ (202 aa)) are ODD. P402 is modified (4-hydroxyproline). Positions 492–516 (QIQDQPASPSDGSTRQSSPEPNSPS) are enriched in polar residues. The disordered stretch occupies residues 492 to 520 (QIQDQPASPSDGSTRQSSPEPNSPSEYCF). Positions 530 to 574 (FKLELVEKLFAEDTEAKNPFSAQDTDLDLEMLAPYIPMDDDFQLR) are NTAD. The residue at position 531 (K531) is an N6-acetyllysine; alternate. K531 participates in a covalent cross-link: Glycyl lysine isopeptide (Lys-Gly) (interchain with G-Cter in ubiquitin); alternate. Glycyl lysine isopeptide (Lys-Gly) (interchain with G-Cter in ubiquitin) cross-links involve residues K537 and K546. A Phosphoserine; by GSK3-beta modification is found at S550. The residue at position 554 (T554) is a Phosphothreonine; by GSK3-beta. At P563 the chain carries 4-hydroxyproline. S575 is modified (phosphoserine; by PLK3). Positions 575 to 784 (SFDQLSPLES…SDLACRLLGQ (210 aa)) are ID. 2 disordered regions span residues 579 to 602 (LSPL…QQTQ) and 654 to 674 (AKAS…RAGK). A Phosphoserine; by GSK3-beta modification is found at S588. Polar residues predominate over residues 654–667 (AKASAYSGTHSRTA). S657 carries the post-translational modification Phosphoserine; by PLK3. The short motif at 717-721 (RKRKM) is the Nuclear localization signal element. The tract at residues 785–825 (SMDESGLPQLTSYDCEVNAPIQGSRNLLQGEELLRALDQVN) is CTAD. At C799 the chain carries S-nitrosocysteine. Position 802 is a (3S)-3-hydroxyasparagine (N802).

Interacts with the ARNT; forms a heterodimer that binds core DNA sequence 5'-TACGTG-3' within the hypoxia response element (HRE) of target gene promoters. Interacts with COPS5; the interaction increases the transcriptional activity of HIF1A through increased stability. Interacts with EP300 (via TAZ-type 1 domains); the interaction is stimulated in response to hypoxia and inhibited by CITED2. Interacts with CREBBP (via TAZ-type 1 domains). Interacts with NCOA1, NCOA2, APEX1 and HSP90. Interacts (hydroxylated within the ODD domain) with VHLL (via beta domain); the interaction, leads to polyubiquitination and subsequent HIF1A proteasomal degradation. During hypoxia, sumoylated HIF1A also binds VHL; the interaction promotes the ubiquitination of HIF1A. Interacts with SENP1; the interaction desumoylates HIF1A resulting in stabilization and activation of transcription. Interacts (via the ODD domain) with NAA10; the interaction appears not to acetylate HIF1A nor have any affect on protein stability, during hypoxia. Interacts with RWDD3; the interaction enhances HIF1A sumoylation. Interacts with TSGA10. Interacts with HIF3A. Interacts with RORA (via the DNA binding domain); the interaction enhances HIF1A transcription under hypoxia through increasing protein stability. Interaction with PSMA7 inhibits the transactivation activity of HIF1A under both normoxic and hypoxia-mimicking conditions. Interacts with USP20. Interacts with RACK1; promotes HIF1A ubiquitination and proteasome-mediated degradation. Interacts (via N-terminus) with USP19. Interacts with SIRT2. Interacts (deacetylated form) with EGLN1. Interacts with CBFA2T3. Interacts with HSP90AA1 and HSP90AB1. Interacts with DCUN1D1; this interaction increases the interaction between VHL and DCUN1D1. Interacts with HIF1AN. In terms of processing, S-nitrosylation of Cys-799 may be responsible for increased recruitment of p300 coactivator necessary for transcriptional activity of HIF-1 complex. Post-translationally, acetylation of Lys-531 by ARD1 increases interaction with VHL and stimulates subsequent proteasomal degradation. Deacetylated by SIRT2 increases its interaction with and hydroxylation by EGLN1 thereby inactivating HIF1A activity by inducing its proteasomal degradation. Ubiquitinated; in normoxia, following hydroxylation and interaction with VHL. Lys-531 appears to be the principal site of ubiquitination. Clioquinol, the Cu/Zn-chelator, inhibits ubiquitination through preventing hydroxylation at Asn-802. Ubiquitinated by E3 ligase VHL. Deubiquitinated by UCHL1. In terms of processing, requires phosphorylation for DNA-binding. Phosphorylation at Ser-247 by CSNK1D/CK1 represses kinase activity and impairs ARNT binding. Phosphorylation by GSK3-beta and PLK3 promote degradation by the proteasome. Post-translationally, the iron and 2-oxoglutarate dependent 3-hydroxylation of asparagine is (S) stereospecific within HIF CTAD domains. Sumoylated; with SUMO1 under hypoxia. Sumoylation is enhanced through interaction with RWDD3. Both sumoylation and desumoylation seem to be involved in the regulation of its stability during hypoxia. Sumoylation can promote either its stabilization or its VHL-dependent degradation by promoting hydroxyproline-independent HIF1A-VHL complex binding, thus leading to HIF1A ubiquitination and proteasomal degradation. Desumoylation by SENP1 increases its stability amd transcriptional activity. There is a disaccord between various publications on the effect of sumoylation and desumoylation on its stability and transcriptional activity. In terms of processing, in normoxia, is hydroxylated on Pro-402 and Pro-563 in the oxygen-dependent degradation domain (ODD) by EGLN1/PHD2 and EGLN2/PHD1. EGLN3/PHD3 has also been shown to hydroxylate Pro-563. The hydroxylated prolines promote interaction with VHL, initiating rapid ubiquitination and subsequent proteasomal degradation. Deubiquitinated by USP20. Under hypoxia, proline hydroxylation is impaired and ubiquitination is attenuated, resulting in stabilization. In normoxia, is hydroxylated on Asn-802 by HIF1AN, thus abrogating interaction with CREBBP and EP300 and preventing transcriptional activation. Repressed by iron ion, via Fe(2+) prolyl hydroxylase (PHD) enzymes-mediated hydroxylation and subsequent proteasomal degradation. Expressed in the kidney, higher expression is seen in the renal medulla than in the cortex. Expressed also in the perivenous zone of the liver.

It is found in the cytoplasm. The protein resides in the nucleus. The protein localises to the nucleus speckle. With respect to regulation, induced by reactive oxygen species (ROS). In terms of biological role, functions as a master transcriptional regulator of the adaptive response to hypoxia. Under hypoxic conditions, activates the transcription of over 40 genes, including erythropoietin, glucose transporters, glycolytic enzymes, vascular endothelial growth factor, HILPDA, and other genes whose protein products increase oxygen delivery or facilitate metabolic adaptation to hypoxia. Plays an essential role in embryonic vascularization, tumor angiogenesis and pathophysiology of ischemic disease. Heterodimerizes with ARNT; heterodimer binds to core DNA sequence 5'-TACGTG-3' within the hypoxia response element (HRE) of target gene promoters. Activation requires recruitment of transcriptional coactivators such as CREBBP and EP300. Activity is enhanced by interaction with NCOA1 and/or NCOA2. Interaction with redox regulatory protein APEX1 seems to activate CTAD and potentiates activation by NCOA1 and CREBBP. Involved in the axonal distribution and transport of mitochondria in neurons during hypoxia. The sequence is that of Hypoxia-inducible factor 1-alpha (Hif1a) from Rattus norvegicus (Rat).